The chain runs to 180 residues: Cytidylate kinase (180 aa).

G7–T15 contacts ATP.

The protein belongs to the cytidylate kinase family. Type 2 subfamily.

Its subcellular location is the cytoplasm. It catalyses the reaction CMP + ATP = CDP + ADP. The enzyme catalyses dCMP + ATP = dCDP + ADP. The chain is Cytidylate kinase (cmk) from Methanosarcina mazei (strain ATCC BAA-159 / DSM 3647 / Goe1 / Go1 / JCM 11833 / OCM 88) (Methanosarcina frisia).